The following is a 611-amino-acid chain: Angiotensin-converting enzyme (611 aa).

Residues 1 to 17 (MKLLVVTILAGLAVCHG) form the signal peptide. Residues 19–607 (TKEEIVATEY…VESLCHQRYK (589 aa)) enclose the Peptidase M2 domain. Residue asparagine 53 is glycosylated (N-linked (GlcNAc...) asparagine). Cysteines 133 and 141 form a disulfide. Asparagine 196 carries N-linked (GlcNAc...) asparagine glycosylation. The cysteines at positions 336 and 354 are disulfide-linked. Histidine 367 is a binding site for Zn(2+). Glutamate 368 acts as the Proton acceptor in catalysis. Zn(2+) is bound by residues histidine 371 and glutamate 395. The active-site Proton donor is the histidine 497. Cysteine 522 and cysteine 540 form a disulfide bridge. A glycan (N-linked (GlcNAc...) asparagine) is linked at asparagine 531.

Belongs to the peptidase M2 family. The cofactor is Zn(2+). As to expression, expressed in the compound ganglion and in the posterior region of the midgut.

It localises to the secreted. The protein localises to the extracellular space. It catalyses the reaction Release of a C-terminal dipeptide, oligopeptide-|-Xaa-Yaa, when Xaa is not Pro, and Yaa is neither Asp nor Glu. Thus, conversion of angiotensin I to angiotensin II, with increase in vasoconstrictor activity, but no action on angiotensin II.. In terms of biological role, involved in the specific maturation or degradation of a number of bioactive peptides. This chain is Angiotensin-converting enzyme (ACE), found in Haematobia irritans exigua (Buffalo fly).